The chain runs to 460 residues: MKGQDVILCDGGRHFSYKVLPRVVIVGRPNVGKSTLFNRLLGRRRSITSNTSGVTRDSIEETVILRGFPLRLVDTSGFTVFSEKKASRQHIDTLVLEQTYKSIQCADKILLVLDGTCESAEDEEVIQYLRPYWGKLIAAVNKTEGGEEVHYNYARYGFSTLICVSAEHGRNIDALERAIIQNLFSVDERRELPKDDVVRLAIVGKPNTGKSTLMNYLMRRTVSLVCDRAGTTRDVVTGHVEFKQYKFIIADTAGIRKRQKVYESIEYYSVIRAISILNAVDIVLYIVDARDGFSEQDKKIVSQISKRNLGVIFLLNKWDLLEGSTSLIAKKKRDVRTAFGKMNFVPVVPVSAKTGHGISDALHCVCKIFAQLNTKVETSALNTALKDWVTSYPPPRKYGHVSLKYLVQVSVRPIEFLLFANRPDRIPENYVRFLQNRIREDLGLDSIPVKLTIRKNCRKR.

2 EngA-type G domains span residues 21-187 and 198-373; these read PRVV…FSVD and VRLA…AQLN. GTP contacts are provided by residues 27 to 34, 74 to 78, 141 to 144, 204 to 211, 251 to 255, and 316 to 319; these read GRPNVGKS, DTSGF, NKTE, GKPNTGKS, DTAGI, and NKWD. The 84-residue stretch at 374–457 folds into the KH-like domain; that stretch reads TKVETSALNT…PVKLTIRKNC (84 aa).

Belongs to the TRAFAC class TrmE-Era-EngA-EngB-Septin-like GTPase superfamily. EngA (Der) GTPase family. Associates with the 50S ribosomal subunit.

Functionally, GTPase that plays an essential role in the late steps of ribosome biogenesis. This Treponema pallidum subsp. pallidum (strain SS14) protein is GTPase Der.